Consider the following 60-residue polypeptide: Single-pass membrane and coiled-coil domain-containing protein 4 homolog (60 aa).

The interval 1 to 23 (MRKLRGGQTKETRKQRQERKEEN) is disordered. A compositionally biased stretch (basic and acidic residues) spans 8–23 (QTKETRKQRQERKEEN). A coiled-coil region spans residues 8-33 (QTKETRKQRQERKEENLKIQQQMKTI). A helical transmembrane segment spans residues 31–51 (KTIVLPTIGVIFLCIVVYVFL).

It belongs to the SMCO4 family.

The protein resides in the membrane. The polypeptide is Single-pass membrane and coiled-coil domain-containing protein 4 homolog (Anopheles gambiae (African malaria mosquito)).